The chain runs to 323 residues: Phospho-N-acetylmuramoyl-pentapeptide-transferase (323 aa).

The next 9 helical transmembrane spans lie at 12 to 32, 58 to 78, 84 to 104, 120 to 140, 151 to 171, 177 to 197, 200 to 220, 229 to 250, and 303 to 323; these read IVMAIVISFIVASILGPIIIP, PTIGGLIFIFATIITMFIMVG, AMIALYSFVGFGFVGFLDDLL, MILLLIVSGFLTWYAYKYIGT, INFGLFYIPFVMFYFAGVTNA, GLDGLATSVTVLVTTFLGIIS, LGHISLAIFCVALAGALLAFL, VFMGDTGSLALGGAVAMVALIL, and KIVSVFSIITVVFCFIAFASL.

The protein belongs to the glycosyltransferase 4 family. MraY subfamily. It depends on Mg(2+) as a cofactor.

The protein resides in the cell membrane. The catalysed reaction is UDP-N-acetyl-alpha-D-muramoyl-L-alanyl-gamma-D-glutamyl-meso-2,6-diaminopimeloyl-D-alanyl-D-alanine + di-trans,octa-cis-undecaprenyl phosphate = di-trans,octa-cis-undecaprenyl diphospho-N-acetyl-alpha-D-muramoyl-L-alanyl-D-glutamyl-meso-2,6-diaminopimeloyl-D-alanyl-D-alanine + UMP. Its pathway is cell wall biogenesis; peptidoglycan biosynthesis. Its function is as follows. Catalyzes the initial step of the lipid cycle reactions in the biosynthesis of the cell wall peptidoglycan: transfers peptidoglycan precursor phospho-MurNAc-pentapeptide from UDP-MurNAc-pentapeptide onto the lipid carrier undecaprenyl phosphate, yielding undecaprenyl-pyrophosphoryl-MurNAc-pentapeptide, known as lipid I. The chain is Phospho-N-acetylmuramoyl-pentapeptide-transferase from Clostridium perfringens (strain ATCC 13124 / DSM 756 / JCM 1290 / NCIMB 6125 / NCTC 8237 / Type A).